A 52-amino-acid chain; its full sequence is UPF0181 protein HI_1434.2 (52 aa).

Belongs to the UPF0181 family.

This chain is UPF0181 protein HI_1434.2, found in Haemophilus influenzae (strain ATCC 51907 / DSM 11121 / KW20 / Rd).